The sequence spans 367 residues: MYGDATNWNEDEYRESILKEREIETRTVFRTAWAPPARISNPDAFVVASSDGTLAFHSLNSLVSQSASFGYSKGQDVMVAEPERVVRAHEGPAYDVKFYGEDEDALLLSCGDDGRVRGWKWREFAESDVSLHLKENHLKPLLELINPQHKGPWGALSPMPEINAMSVDPQSGSVFTAAGDSCAYCWDVESGKIKMTFKGHSDYLHTVVSRSSASQILTGSEDGTARIWDCKTGKCVKVIGSQDKKSRLRVSSMALDGSESWLVCGQGKNLALWNLPASECVQTIPIPAHVQDVMFDEKQILTVGAEPLLRRFDLNGALLSQIHCAPCSVFSISLHPAGVVAVGGYGGIVDVISQFGSHLCTFRSSSL.

WD repeat units follow at residues 23–67 (IETR…SQSA), 88–129 (AHEG…ESDV), 157–196 (SPMP…IKMT), 199–240 (GHSD…KVIG), 243–283 (DKKS…CVQT), 285–322 (PIPA…LSQI), and 324–363 (CAPC…CTFR).

The protein belongs to the WD repeat THOC6 family. In terms of assembly, component of the THO complex, which is composed of THO1, THO2, THO3, THO5, THO6 and THO7. Interacts with ABI5, DDB1A and DWA2.

It localises to the nucleus. It participates in protein modification; protein ubiquitination. Its function is as follows. Acts as a component of the THO subcomplex of the TREX complex which is thought to couple mRNA transcription, processing and nuclear export. Component of the CUL4-RBX1-DDB1-DWA1/DWA2 E3 ubiquitin-protein ligase complex that acts as a negative regulator in abscisic acid (ABA) signaling. May function as the substrate recognition module within this complex leading to ABI5 degradation. Functionally redundant with DWA2. This Arabidopsis thaliana (Mouse-ear cress) protein is THO complex subunit 6 (THO6).